The following is a 321-amino-acid chain: Lipoyl synthase (321 aa).

The [4Fe-4S] cluster site is built by cysteine 68, cysteine 73, cysteine 79, cysteine 94, cysteine 98, cysteine 101, and serine 308. The Radical SAM core domain occupies 80–297 (FNHGTATFMI…KALADELGFT (218 aa)).

Belongs to the radical SAM superfamily. Lipoyl synthase family. Requires [4Fe-4S] cluster as cofactor.

It is found in the cytoplasm. The catalysed reaction is [[Fe-S] cluster scaffold protein carrying a second [4Fe-4S](2+) cluster] + N(6)-octanoyl-L-lysyl-[protein] + 2 oxidized [2Fe-2S]-[ferredoxin] + 2 S-adenosyl-L-methionine + 4 H(+) = [[Fe-S] cluster scaffold protein] + N(6)-[(R)-dihydrolipoyl]-L-lysyl-[protein] + 4 Fe(3+) + 2 hydrogen sulfide + 2 5'-deoxyadenosine + 2 L-methionine + 2 reduced [2Fe-2S]-[ferredoxin]. Its pathway is protein modification; protein lipoylation via endogenous pathway; protein N(6)-(lipoyl)lysine from octanoyl-[acyl-carrier-protein]: step 2/2. In terms of biological role, catalyzes the radical-mediated insertion of two sulfur atoms into the C-6 and C-8 positions of the octanoyl moiety bound to the lipoyl domains of lipoate-dependent enzymes, thereby converting the octanoylated domains into lipoylated derivatives. The protein is Lipoyl synthase of Shewanella putrefaciens (strain CN-32 / ATCC BAA-453).